The sequence spans 721 residues: Catalase-peroxidase (721 aa).

The tryptophyl-tyrosyl-methioninium (Trp-Tyr) (with M-249) cross-link spans 95 to 223 (WHSAGSYRLF…LGAVHMGLIY (129 aa)). H96 (proton acceptor) is an active-site residue. A cross-link (tryptophyl-tyrosyl-methioninium (Tyr-Met) (with W-95)) is located at residues 223–249 (YVNPQGRDGKPDPLKSAHDVRVTFKRM). Position 264 (H264) interacts with heme b.

Belongs to the peroxidase family. Peroxidase/catalase subfamily. As to quaternary structure, homodimer or homotetramer. The cofactor is heme b. Formation of the three residue Trp-Tyr-Met cross-link is important for the catalase, but not the peroxidase activity of the enzyme.

The enzyme catalyses H2O2 + AH2 = A + 2 H2O. The catalysed reaction is 2 H2O2 = O2 + 2 H2O. Its function is as follows. Bifunctional enzyme with both catalase and broad-spectrum peroxidase activity. The chain is Catalase-peroxidase from Parvibaculum lavamentivorans (strain DS-1 / DSM 13023 / NCIMB 13966).